Reading from the N-terminus, the 425-residue chain is Enolase (425 aa).

(2R)-2-phosphoglycerate is bound at residue Q163. E205 acts as the Proton donor in catalysis. Residues D242, E285, and D312 each contribute to the Mg(2+) site. 4 residues coordinate (2R)-2-phosphoglycerate: K337, R366, S367, and K388. K337 functions as the Proton acceptor in the catalytic mechanism.

The protein belongs to the enolase family. Mg(2+) is required as a cofactor.

It localises to the cytoplasm. It is found in the secreted. The protein resides in the cell surface. The catalysed reaction is (2R)-2-phosphoglycerate = phosphoenolpyruvate + H2O. It participates in carbohydrate degradation; glycolysis; pyruvate from D-glyceraldehyde 3-phosphate: step 4/5. Catalyzes the reversible conversion of 2-phosphoglycerate (2-PG) into phosphoenolpyruvate (PEP). It is essential for the degradation of carbohydrates via glycolysis. This Acidiphilium cryptum (strain JF-5) protein is Enolase.